The sequence spans 339 residues: Ribosomal RNA small subunit methyltransferase H (339 aa).

S-adenosyl-L-methionine-binding positions include 36-38 (GGY), Asp-55, Phe-82, Asp-103, and Gln-110. Residues 286–319 (GPIGPSEAEATANPRARSAKLRAGERTDAPIPEP) form a disordered region.

The protein belongs to the methyltransferase superfamily. RsmH family.

It is found in the cytoplasm. It carries out the reaction cytidine(1402) in 16S rRNA + S-adenosyl-L-methionine = N(4)-methylcytidine(1402) in 16S rRNA + S-adenosyl-L-homocysteine + H(+). Its function is as follows. Specifically methylates the N4 position of cytidine in position 1402 (C1402) of 16S rRNA. The chain is Ribosomal RNA small subunit methyltransferase H from Methylobacterium nodulans (strain LMG 21967 / CNCM I-2342 / ORS 2060).